The following is a 376-amino-acid chain: Chaperone protein DnaJ (376 aa).

The J domain occupies 5-70 (DYYEILGVSK…QKRAAYDQYG (66 aa)). The segment at 131 to 209 (GVTKEIRIPT…CHGHGRVERS (79 aa)) adopts a CR-type zinc-finger fold. Zn(2+)-binding residues include Cys144, Cys147, Cys161, Cys164, Cys183, Cys186, Cys197, and Cys200. CXXCXGXG motif repeat units lie at residues 144–151 (CDVCHGSG), 161–168 (CPTCHGSG), 183–190 (CPHCQGRG), and 197–204 (CNKCHGHG).

Belongs to the DnaJ family. In terms of assembly, homodimer. Requires Zn(2+) as cofactor.

Its subcellular location is the cytoplasm. Participates actively in the response to hyperosmotic and heat shock by preventing the aggregation of stress-denatured proteins and by disaggregating proteins, also in an autonomous, DnaK-independent fashion. Unfolded proteins bind initially to DnaJ; upon interaction with the DnaJ-bound protein, DnaK hydrolyzes its bound ATP, resulting in the formation of a stable complex. GrpE releases ADP from DnaK; ATP binding to DnaK triggers the release of the substrate protein, thus completing the reaction cycle. Several rounds of ATP-dependent interactions between DnaJ, DnaK and GrpE are required for fully efficient folding. Also involved, together with DnaK and GrpE, in the DNA replication of plasmids through activation of initiation proteins. This is Chaperone protein DnaJ from Escherichia coli (strain K12 / MC4100 / BW2952).